We begin with the raw amino-acid sequence, 218 residues long: MRLILLGPPGAGKGTQAAFLTQHYGIPQISTGDMLRAAVKAGTPLGLEAKKVMDAGGLVSDDLIIGLVRDRLTQPDCANGYLFDGFPRTIPQADALKSAGIALDYVVEIEVPESDIIERMSGRRVHPASGRSYHVRFNPPKAEGVDDVTGEPLVQRDDDREETVRHRLNVYQNQTRPLVDYYSSWAQSDAAAAPKYRKISGVGSVDEIKSRLSQALQS.

Position 10 to 15 (10 to 15 (GAGKGT)) interacts with ATP. The tract at residues 30–59 (STGDMLRAAVKAGTPLGLEAKKVMDAGGLV) is NMP. Residues Thr-31, Arg-36, 57–59 (GLV), 85–88 (GFPR), and Gln-92 contribute to the AMP site. Residues 122 to 159 (GRRVHPASGRSYHVRFNPPKAEGVDDVTGEPLVQRDDD) form an LID region. Residues Arg-123 and 132–133 (SY) contribute to the ATP site. AMP contacts are provided by Arg-156 and Arg-167. ATP is bound at residue Gly-203.

Belongs to the adenylate kinase family. As to quaternary structure, monomer.

It localises to the cytoplasm. The catalysed reaction is AMP + ATP = 2 ADP. The protein operates within purine metabolism; AMP biosynthesis via salvage pathway; AMP from ADP: step 1/1. Its function is as follows. Catalyzes the reversible transfer of the terminal phosphate group between ATP and AMP. Plays an important role in cellular energy homeostasis and in adenine nucleotide metabolism. The polypeptide is Adenylate kinase (Bordetella bronchiseptica (strain ATCC BAA-588 / NCTC 13252 / RB50) (Alcaligenes bronchisepticus)).